A 47-amino-acid chain; its full sequence is uncharacterized protein (47 aa).

The segment at 19–47 is disordered; that stretch reads EKVLKNQNPDRLSHMTDKNAQPKSKEKEE.

This is an uncharacterized protein from Bacillus subtilis (strain 168).